We begin with the raw amino-acid sequence, 236 residues long: uncharacterized protein (236 aa).

The tract at residues 186–236 is disordered; that stretch reads HGRGDTRNLNDITGLGHERERDRENTHYEKKPKLDSDSEVDIRSFRQDMDL. Over residues 201 to 236 the composition is skewed to basic and acidic residues; it reads GHERERDRENTHYEKKPKLDSDSEVDIRSFRQDMDL. Phosphoserine is present on S221.

This is an uncharacterized protein from Saccharomyces cerevisiae (strain ATCC 204508 / S288c) (Baker's yeast).